We begin with the raw amino-acid sequence, 309 residues long: Olfactory receptor 10V1 (309 aa).

Topologically, residues 1–25 (MEGINKTAKMQFFFRPFSPDPEVQM) are extracellular. Asn5 carries an N-linked (GlcNAc...) asparagine glycan. Residues 26–46 (LIFVVFLMMYLTSLGGNATIA) form a helical membrane-spanning segment. Topologically, residues 47-54 (VIVQINHS) are cytoplasmic. A helical transmembrane segment spans residues 55 to 75 (LHTPMYFFLANLAVLEIFYTS). Residues 76–100 (SITPLALANLLSMGKTPVSITGCGT) lie on the Extracellular side of the membrane. A disulfide bridge connects residues Cys98 and Cys190. A helical membrane pass occupies residues 101-121 (QMFFFVFLGGADCVLLVVMAY). At 122-140 (DQFIAICHPLRYRLIMSWS) the chain is on the cytoplasmic side. A helical transmembrane segment spans residues 141–161 (LCVELLVGSLVLGFLLSLPLT). Over 162–198 (ILIFHLPFCHNDEIYHFYCDMPAVMRLACADTRVHKT) the chain is Extracellular. Residues 199-218 (ALYIISFIVLSIPLSLISIS) form a helical membrane-spanning segment. The Cytoplasmic segment spans residues 219-238 (YVFIVVAILRIRSAEGRQQA). The helical transmembrane segment at 239–259 (YSTCSSHILVVLLQYGCTSFI) threads the bilayer. Residues 260–272 (YLSPSSSYSPEMG) lie on the Extracellular side of the membrane. Residues 273 to 293 (RVVSVAYTFITPILNPLIYSL) traverse the membrane as a helical segment. Residues 294–309 (RNKELKDALRKALRKF) lie on the Cytoplasmic side of the membrane.

Belongs to the G-protein coupled receptor 1 family.

It is found in the cell membrane. In terms of biological role, odorant receptor. In Homo sapiens (Human), this protein is Olfactory receptor 10V1 (OR10V1).